A 217-amino-acid chain; its full sequence is MSFASGCTPVSFDKLFEVSSGDKVSRENWGMIARPEPQHDSLKRRNTTSSIAKKKAKMTRGDEQITDETARKAATQLLDQIQDTPGRISLNFETPEAASVCPIPTSLNQIVNTKWTVNQLQEGQLTMLLAQDANKFKSLGVKNIKKGSVETQILPRQMDVKEIVEKLKKQDNDSDQFVGYAAAVANVLRRCDAETAQKITQAITATIEKEAPSIVNC.

Positions 33-65 (ARPEPQHDSLKRRNTTSSIAKKKAKMTRGDEQI) are disordered. Residues 44–58 (RRNTTSSIAKKKAKM) are compositionally biased toward basic residues.

As to quaternary structure, interacts with double-stranded RNA-specific adenosine deaminase adr-2. In terms of tissue distribution, expressed in main body hypodermal cells, the hypodermal seam cells, pharynx, intestine and some neurons.

The protein localises to the nucleus. Its function is as follows. Required for the A-I editing activity of the double-stranded RNA-specific adenosine deaminase adr-2 by facilitating adr-2 nuclear localization. In Caenorhabditis elegans, this protein is Adr-2-binding protein 1.